We begin with the raw amino-acid sequence, 483 residues long: uncharacterized protein (483 aa).

This is an uncharacterized protein from Acanthamoeba polyphaga mimivirus (APMV).